A 209-amino-acid polypeptide reads, in one-letter code: Cytidylate kinase (209 aa).

9–17 (GPAAAGKGT) is an ATP binding site.

Belongs to the cytidylate kinase family. Type 1 subfamily.

It is found in the cytoplasm. The catalysed reaction is CMP + ATP = CDP + ADP. It carries out the reaction dCMP + ATP = dCDP + ADP. The chain is Cytidylate kinase from Granulibacter bethesdensis (strain ATCC BAA-1260 / CGDNIH1).